The chain runs to 480 residues: 3,6-anhydro-alpha-L-galactose dehydrogenase (480 aa).

NADP(+) contacts are provided by residues 149 to 150 (WN), 173 to 176 (KPTS), and 226 to 227 (GS). Glu-248 acts as the Proton acceptor in catalysis. Residue Leu-249 participates in NADP(+) binding. Cys-282 functions as the Nucleophile in the catalytic mechanism. Glu-383 provides a ligand contact to NADP(+).

This sequence belongs to the aldehyde dehydrogenase family.

The catalysed reaction is 3,6-anhydro-alpha-L-galactopyranose + NADP(+) + H2O = 3,6-anhydro-L-galactonate + NADPH + 2 H(+). The enzyme catalyses 3,6-anhydro-alpha-L-galactopyranose + NAD(+) + H2O = 3,6-anhydro-L-galactonate + NADH + 2 H(+). Its function is as follows. Involved in the degradation of 3,6-anhydro-L-galactose, which is the major monomeric sugar of red macroalgae. Catalyzes the oxidation of 3,6-anhydro-L-galactose (AHG) to form 3,6-anhydrogalactonate (AHGA). The polypeptide is 3,6-anhydro-alpha-L-galactose dehydrogenase (Vibrio sp. (strain EJY3)).